The following is a 146-amino-acid chain: Ribonuclease H (146 aa).

The RNase H type-1 domain maps to 1 to 141 (MKKVQLITDG…CDELATRAAR (141 aa)). The Mg(2+) site is built by aspartate 9, glutamate 47, aspartate 69, and aspartate 133.

The protein belongs to the RNase H family. In terms of assembly, monomer. The cofactor is Mg(2+).

It localises to the cytoplasm. The enzyme catalyses Endonucleolytic cleavage to 5'-phosphomonoester.. Its function is as follows. Endonuclease that specifically degrades the RNA of RNA-DNA hybrids. This chain is Ribonuclease H, found in Solibacter usitatus (strain Ellin6076).